The primary structure comprises 81 residues: Large ribosomal subunit protein bL31B (81 aa).

It belongs to the bacterial ribosomal protein bL31 family. Type B subfamily. In terms of assembly, part of the 50S ribosomal subunit.

This chain is Large ribosomal subunit protein bL31B, found in Lactococcus lactis subsp. lactis (strain IL1403) (Streptococcus lactis).